Here is a 554-residue protein sequence, read N- to C-terminus: Flavin-dependent halogenase ascD (554 aa).

Residues Gly-15, Gly-18, and Glu-48 each contribute to the FAD site. Chloride is bound by residues Ser-331 and Gly-332. Val-333 lines the FAD pocket.

It belongs to the flavin-dependent halogenase family.

It carries out the reaction ilicicolin B + FADH2 + chloride + O2 = ilicicolin A + FAD + 2 H2O + H(+). Its pathway is secondary metabolite biosynthesis; terpenoid biosynthesis. Functionally, flavin-dependent halogenase; part of the asc-1 gene cluster that mediates the biosynthesis of both ascochlorin and ascofuranone, a strong inhibitor of cyanide-insensitive alternative oxidases and a promising drug candidate against African trypanosomiasis. The first step in the pathway is performed by the non-reducing polyketide synthase ascC that produces orsellinic acid by condensing acetyl-CoA with 3 malonyl-CoA units. Orsellinic acid is then prenylated by the prenyltransferase ascA to yield ilicicolinic acid B. Ilicicolinic acid B is further reduced to ilicicolin B by the reductase ascB. The halogenase ascD then chlorinates ilicicolin B to produce ilicicolin A which is converted to ilicicolin A epoxide by the cytochrome P450 monooxygenase ascE that catalyzes stereoselective epoxidation of the terminal double bond of the prenyl group. Ilicicolin A epoxide is the last common precursor for the biosynthesis of ascofuranone and ascochlorin. The terpene cyclase ascF produces a monocyclic terpene, and the cyclization reaction is proposed to be initiated by protonation of the terminal epoxide of ilicicolin A epoxide to generate a monocyclic tertiarycation, which is followed by a series of hydride and methyl shifts with abstraction of proton, leading to the formation of the (14S,15R,19R)-trimethylcyclohexanone ring structure of ilicicolin C, which is finally reduced to ascochlorin by the dehydrogenase ascG. On the other hand, ilicicolin A epoxide is hydroxylated by the cytochrome P450 monooxygenase ascH, and the resultant product is cyclized by the terpene cyclase ascI to ascofuranol via protonation-initiated epoxide ring opening, which facilitates the 6-endo-tet cyclization to form the tetrahy-drofuran ring. Finally, ascofuranol is oxidized into ascofuranone by ascJ. This is Flavin-dependent halogenase ascD from Acremonium egyptiacum (Oospora egyptiaca).